A 397-amino-acid chain; its full sequence is CCA-adding enzyme (397 aa).

2 residues coordinate ATP: glycine 26 and arginine 29. CTP-binding residues include glycine 26 and arginine 29. Mg(2+)-binding residues include aspartate 39 and aspartate 41. Residues arginine 110, aspartate 153, arginine 156, arginine 159, and arginine 162 each contribute to the ATP site. 5 residues coordinate CTP: arginine 110, aspartate 153, arginine 156, arginine 159, and arginine 162.

This sequence belongs to the tRNA nucleotidyltransferase/poly(A) polymerase family. Bacterial CCA-adding enzyme type 3 subfamily. Homodimer. Mg(2+) is required as a cofactor.

It carries out the reaction a tRNA precursor + 2 CTP + ATP = a tRNA with a 3' CCA end + 3 diphosphate. The catalysed reaction is a tRNA with a 3' CCA end + 2 CTP + ATP = a tRNA with a 3' CCACCA end + 3 diphosphate. Its function is as follows. Catalyzes the addition and repair of the essential 3'-terminal CCA sequence in tRNAs without using a nucleic acid template. Adds these three nucleotides in the order of C, C, and A to the tRNA nucleotide-73, using CTP and ATP as substrates and producing inorganic pyrophosphate. tRNA 3'-terminal CCA addition is required both for tRNA processing and repair. Also involved in tRNA surveillance by mediating tandem CCA addition to generate a CCACCA at the 3' terminus of unstable tRNAs. While stable tRNAs receive only 3'-terminal CCA, unstable tRNAs are marked with CCACCA and rapidly degraded. The sequence is that of CCA-adding enzyme from Bacillus cytotoxicus (strain DSM 22905 / CIP 110041 / 391-98 / NVH 391-98).